The sequence spans 424 residues: D-inositol 3-phosphate glycosyltransferase (424 aa).

Histidine 16 lines the 1D-myo-inositol 3-phosphate pocket. Residues 22–23 and glycine 30 contribute to the UDP-N-acetyl-alpha-D-glucosamine site; that span reads QP. 1D-myo-inositol 3-phosphate-binding positions include 27–32, lysine 85, tyrosine 118, threonine 142, and arginine 162; that span reads DAGGMN. Residues arginine 240 and lysine 245 each contribute to the UDP-N-acetyl-alpha-D-glucosamine site. Residues methionine 313, arginine 314, and alanine 316 each coordinate Mg(2+). The UDP-N-acetyl-alpha-D-glucosamine site is built by glutamate 326 and glutamate 334. Threonine 340 contacts Mg(2+).

This sequence belongs to the glycosyltransferase group 1 family. MshA subfamily. Homodimer.

The catalysed reaction is 1D-myo-inositol 3-phosphate + UDP-N-acetyl-alpha-D-glucosamine = 1D-myo-inositol 2-acetamido-2-deoxy-alpha-D-glucopyranoside 3-phosphate + UDP + H(+). Functionally, catalyzes the transfer of a N-acetyl-glucosamine moiety to 1D-myo-inositol 3-phosphate to produce 1D-myo-inositol 2-acetamido-2-deoxy-glucopyranoside 3-phosphate in the mycothiol biosynthesis pathway. This Jonesia denitrificans (strain ATCC 14870 / DSM 20603 / BCRC 15368 / CIP 55.134 / JCM 11481 / NBRC 15587 / NCTC 10816 / Prevot 55134) (Listeria denitrificans) protein is D-inositol 3-phosphate glycosyltransferase.